The sequence spans 417 residues: Gamma-glutamyl phosphate reductase (417 aa).

It belongs to the gamma-glutamyl phosphate reductase family.

It is found in the cytoplasm. The enzyme catalyses L-glutamate 5-semialdehyde + phosphate + NADP(+) = L-glutamyl 5-phosphate + NADPH + H(+). It functions in the pathway amino-acid biosynthesis; L-proline biosynthesis; L-glutamate 5-semialdehyde from L-glutamate: step 2/2. In terms of biological role, catalyzes the NADPH-dependent reduction of L-glutamate 5-phosphate into L-glutamate 5-semialdehyde and phosphate. The product spontaneously undergoes cyclization to form 1-pyrroline-5-carboxylate. The protein is Gamma-glutamyl phosphate reductase of Escherichia coli O127:H6 (strain E2348/69 / EPEC).